A 52-amino-acid polypeptide reads, in one-letter code: MIKIQLESSNQSVLKLEERRLNLTAEIERIYGQMDLKRKELENANLRLHVFN.

The stretch at 3-46 (KIQLESSNQSVLKLEERRLNLTAEIERIYGQMDLKRKELENANL) forms a coiled coil.

This is an uncharacterized protein from Dictyostelium discoideum (Social amoeba).